The chain runs to 417 residues: Tyrosine--tRNA ligase (417 aa).

L-tyrosine is bound at residue tyrosine 39. The 'HIGH' region signature appears at 44 to 53 (PTASSLHVGH). L-tyrosine contacts are provided by tyrosine 176 and glutamine 180. The 'KMSKS' region motif lies at 236 to 240 (KMGKS). Position 239 (lysine 239) interacts with ATP. The region spanning 350-416 (VGVLSLIVRA…GKKKHVLVRP (67 aa)) is the S4 RNA-binding domain.

Belongs to the class-I aminoacyl-tRNA synthetase family. TyrS type 1 subfamily. Homodimer.

The protein localises to the cytoplasm. It catalyses the reaction tRNA(Tyr) + L-tyrosine + ATP = L-tyrosyl-tRNA(Tyr) + AMP + diphosphate + H(+). Catalyzes the attachment of tyrosine to tRNA(Tyr) in a two-step reaction: tyrosine is first activated by ATP to form Tyr-AMP and then transferred to the acceptor end of tRNA(Tyr). The protein is Tyrosine--tRNA ligase of Agrobacterium fabrum (strain C58 / ATCC 33970) (Agrobacterium tumefaciens (strain C58)).